A 297-amino-acid polypeptide reads, in one-letter code: 4-hydroxy-tetrahydrodipicolinate synthase (297 aa).

Position 47 (Thr-47) interacts with pyruvate. Tyr-136 (proton donor/acceptor) is an active-site residue. The active-site Schiff-base intermediate with substrate is the Lys-165. Residue Ile-206 participates in pyruvate binding.

The protein belongs to the DapA family. As to quaternary structure, homotetramer; dimer of dimers.

The protein resides in the cytoplasm. It catalyses the reaction L-aspartate 4-semialdehyde + pyruvate = (2S,4S)-4-hydroxy-2,3,4,5-tetrahydrodipicolinate + H2O + H(+). It participates in amino-acid biosynthesis; L-lysine biosynthesis via DAP pathway; (S)-tetrahydrodipicolinate from L-aspartate: step 3/4. Catalyzes the condensation of (S)-aspartate-beta-semialdehyde [(S)-ASA] and pyruvate to 4-hydroxy-tetrahydrodipicolinate (HTPA). This chain is 4-hydroxy-tetrahydrodipicolinate synthase, found in Campylobacter concisus (strain 13826).